Reading from the N-terminus, the 364-residue chain is UDP-3-O-acylglucosamine N-acyltransferase (364 aa).

H257 serves as the catalytic Proton acceptor.

This sequence belongs to the transferase hexapeptide repeat family. LpxD subfamily. Homotrimer.

The enzyme catalyses a UDP-3-O-[(3R)-3-hydroxyacyl]-alpha-D-glucosamine + a (3R)-hydroxyacyl-[ACP] = a UDP-2-N,3-O-bis[(3R)-3-hydroxyacyl]-alpha-D-glucosamine + holo-[ACP] + H(+). It functions in the pathway bacterial outer membrane biogenesis; LPS lipid A biosynthesis. Catalyzes the N-acylation of UDP-3-O-acylglucosamine using 3-hydroxyacyl-ACP as the acyl donor. Is involved in the biosynthesis of lipid A, a phosphorylated glycolipid that anchors the lipopolysaccharide to the outer membrane of the cell. In Paracoccus denitrificans (strain Pd 1222), this protein is UDP-3-O-acylglucosamine N-acyltransferase.